Reading from the N-terminus, the 427-residue chain is MEWPARLCGLWALLLCAGGGGGGGGAAPTETQPPVTNLSVSVENLCTVIWTWNPPEGASSNCSLWYFSHFGDKQDKKIAPETRRSIEVPLNERICLQVGSQCSTNESEKPSILVEKCISPPEGDPESAVTELQCIWHNLSYMKCSWLPGRNTSPDTNYTLYYWHRSLEKIHQCENIFREGQYFGCSFDLTKVKDSSFEQHSVQIMVKDNAGKIKPSFNIVPLTSRVKPDPPHIKNLSFHNDDLYVQWENPQNFISRCLFYEVEVNNSQTETHNVFYVQEAKCENPEFERNVENTSCFMVPGVLPDTLNTVRIRVKTNKLCYEDDKLWSNWSQEMSIGKKRNSTLYITMLLIVPVIVAGAIIVLLLYLKRLKIIIFPPIPDPGKIFKEMFGDQNDDTLHWKKYDIYEKQTKEETDSVVLIENLKKASQ.

A signal peptide spans 1 to 21; the sequence is MEWPARLCGLWALLLCAGGGG. At 22–343 the chain is on the extracellular side; the sequence is GGGGAAPTET…MSIGKKRNST (322 aa). Fibronectin type-III domains lie at 34–123, 128–226, and 227–339; these read PVTN…PPEG, AVTE…TSRV, and KPDP…IGKK. N37 and N61 each carry an N-linked (GlcNAc...) asparagine glycan. Intrachain disulfides connect C62–C102, C95–C117, and C134–C144. N105, N138, and N157 each carry an N-linked (GlcNAc...) asparagine glycan. C173 and C185 are disulfide-bonded. N-linked (GlcNAc...) asparagine glycosylation is found at N235, N265, N293, N329, and N341. 2 disulfides stabilise this stretch: C257–C320 and C282–C296. Positions 327–331 match the WSXWS motif motif; the sequence is WSNWS. Residues 344-367 form a helical membrane-spanning segment; that stretch reads LYITMLLIVPVIVAGAIIVLLLYL. Over 368–427 the chain is Cytoplasmic; sequence KRLKIIIFPPIPDPGKIFKEMFGDQNDDTLHWKKYDIYEKQTKEETDSVVLIENLKKASQ. A Box 1 motif motif is present at residues 374–382; it reads IFPPIPDPG.

The protein belongs to the type I cytokine receptor family. Type 5 subfamily. Interleukin-13 receptor is a complex of IL4R, IL13RA1, and possibly other components. Interacts with TRAF3IP1. Interacts with IL4. Ubiquitous. Highest levels in heart, liver, skeletal muscle and ovary; lowest levels in brain, lung and kidney. Also found in B-cells, T-cells and endothelial cells.

The protein localises to the membrane. Functionally, binds with low affinity to interleukin-13 (IL13). Together with IL4RA can form a functional receptor for IL13. Also serves as an alternate accessory protein to the common cytokine receptor gamma chain for interleukin-4 (IL4) signaling, but cannot replace the function of IL2RG in allowing enhanced interleukin-2 (IL2) binding activity. This Homo sapiens (Human) protein is Interleukin-13 receptor subunit alpha-1 (IL13RA1).